The chain runs to 407 residues: Imidazolonepropionase (407 aa).

Residues H68 and H70 each coordinate Fe(3+). Residues H68 and H70 each coordinate Zn(2+). 4-imidazolone-5-propanoate is bound by residues R77, Y140, and H173. N-formimidoyl-L-glutamate is bound at residue Y140. H238 serves as a coordination point for Fe(3+). H238 lines the Zn(2+) pocket. Residue Q241 participates in 4-imidazolone-5-propanoate binding. Fe(3+) is bound at residue D313. D313 is a Zn(2+) binding site. N-formimidoyl-L-glutamate is bound by residues N315 and G317. T318 lines the 4-imidazolone-5-propanoate pocket.

This sequence belongs to the metallo-dependent hydrolases superfamily. HutI family. Zn(2+) is required as a cofactor. The cofactor is Fe(3+).

It is found in the cytoplasm. The catalysed reaction is 4-imidazolone-5-propanoate + H2O = N-formimidoyl-L-glutamate. The protein operates within amino-acid degradation; L-histidine degradation into L-glutamate; N-formimidoyl-L-glutamate from L-histidine: step 3/3. Functionally, catalyzes the hydrolytic cleavage of the carbon-nitrogen bond in imidazolone-5-propanoate to yield N-formimidoyl-L-glutamate. It is the third step in the universal histidine degradation pathway. In Burkholderia pseudomallei (strain 1710b), this protein is Imidazolonepropionase.